The primary structure comprises 1259 residues: Protein flightless-1 homolog (1259 aa).

15 LRR repeats span residues 7 to 32 (LPFIRGVDLSGNDFKGGNFPEHVKSM), 33 to 55 (TSLRWLKLNRTGLCYLPEELASL), 56 to 78 (QKLEHLSVSHNSLTTLHGELSSL), 80 to 103 (NLRAVVARANNLKNSGVPDDIFQL), 104 to 126 (DDLSVLDLSHNQLTEIPRDLENS), 128 to 149 (NMLVLNLSHNSIDNIPNQLFIN), 150 to 173 (LTDLLYLDLSDNNLDSLPPQMRRL), 176 to 201 (LQTLILNNNPLMHAQLRQLPVMVSLQ), 222 to 245 (LSNLTDVDLSCNDLTRVPECLYSL), 247 to 268 (NLKRLNLSSNQISELSLCIDQW), 269 to 291 (TKLETLNLSRNQLTSLPSAICKL), 293 to 316 (KLKKLYVNSNKIDFDGLPSGVGKL), 317 to 339 (SNLVEFMAANNNLELVPEGLCRC), 340 to 363 (GKLKKLVLNKNRLVTLPEAIHFLT), and 365 to 385 (LEVLDVRENPNLVMPPKPVDR). Gelsolin-like repeat units follow at residues 509-589 (IPIQ…SEEF), 628-702 (NIRL…PEFW), 757-830 (DVVP…CQVF), and 1170-1225 (EKCS…RSKD).

Expressed in ventricular cardiomyocytes, where it particularly localizes to intercalated disks and costamere-like structures (at protein level).

The protein localises to the nucleus. The protein resides in the cytoplasm. Its subcellular location is the cytoskeleton. It is found in the microtubule organizing center. It localises to the centrosome. The protein localises to the cell junction. The protein resides in the focal adhesion. Is a regulator of actin polymerization, required for proper myofibril organization and the assembly of cardiomyocyte cell adhesion complexes. Is a regulator of the length of sarcomeric thin filaments. Regulates cytoskeletal rearrangements involved in cytokinesis and cell migration, by inhibiting Rac1-dependent paxillin phosphorylation. May play a role as coactivator in transcriptional activation by hormone-activated nuclear receptors (NR) and acts in cooperation with NCOA2 and CARM1. Involved in estrogen hormone signaling. In Danio rerio (Zebrafish), this protein is Protein flightless-1 homolog.